The sequence spans 444 residues: Aspartate--tRNA(Asp/Asn) ligase (444 aa).

E176 provides a ligand contact to L-aspartate. The tract at residues 198–201 is aspartate; that stretch reads QLFK. L-aspartate is bound at residue R220. Residues 220–222, 228–230, and E367 contribute to the ATP site; these read RAE and RHL. The Mg(2+) site is built by E367 and S370. Residues S370 and R374 each coordinate L-aspartate. 415–418 contributes to the ATP binding site; sequence GCER.

Belongs to the class-II aminoacyl-tRNA synthetase family. Type 2 subfamily. Homodimer. The cofactor is Mg(2+).

The protein resides in the cytoplasm. It catalyses the reaction tRNA(Asx) + L-aspartate + ATP = L-aspartyl-tRNA(Asx) + AMP + diphosphate. Functionally, aspartyl-tRNA synthetase with relaxed tRNA specificity since it is able to aspartylate not only its cognate tRNA(Asp) but also tRNA(Asn). Reaction proceeds in two steps: L-aspartate is first activated by ATP to form Asp-AMP and then transferred to the acceptor end of tRNA(Asp/Asn). In Methanosarcina acetivorans (strain ATCC 35395 / DSM 2834 / JCM 12185 / C2A), this protein is Aspartate--tRNA(Asp/Asn) ligase.